A 162-amino-acid chain; its full sequence is D-aminoacyl-tRNA deacylase (162 aa).

Residues 145 to 146 (GP) carry the Gly-cisPro motif, important for rejection of L-amino acids motif.

This sequence belongs to the DTD family. As to quaternary structure, homodimer.

Its subcellular location is the cytoplasm. It catalyses the reaction glycyl-tRNA(Ala) + H2O = tRNA(Ala) + glycine + H(+). The enzyme catalyses a D-aminoacyl-tRNA + H2O = a tRNA + a D-alpha-amino acid + H(+). Its function is as follows. An aminoacyl-tRNA editing enzyme that deacylates mischarged D-aminoacyl-tRNAs. Also deacylates mischarged glycyl-tRNA(Ala), protecting cells against glycine mischarging by AlaRS. Acts via tRNA-based rather than protein-based catalysis; rejects L-amino acids rather than detecting D-amino acids in the active site. By recycling D-aminoacyl-tRNA to D-amino acids and free tRNA molecules, this enzyme counteracts the toxicity associated with the formation of D-aminoacyl-tRNA entities in vivo and helps enforce protein L-homochirality. This is D-aminoacyl-tRNA deacylase from Bifidobacterium longum (strain NCC 2705).